Consider the following 200-residue polypeptide: Small ribosomal subunit protein uS4 (200 aa).

Residues 92-155 (SRLDAVVYSL…QKLNIIVESV (64 aa)) form the S4 RNA-binding domain.

The protein belongs to the universal ribosomal protein uS4 family. As to quaternary structure, part of the 30S ribosomal subunit. Contacts protein S5. The interaction surface between S4 and S5 is involved in control of translational fidelity.

In terms of biological role, one of the primary rRNA binding proteins, it binds directly to 16S rRNA where it nucleates assembly of the body of the 30S subunit. Functionally, with S5 and S12 plays an important role in translational accuracy. This chain is Small ribosomal subunit protein uS4, found in Staphylococcus aureus (strain JH9).